The following is a 1971-amino-acid chain: Germinal-center associated nuclear protein (1971 aa).

Disordered regions lie at residues 1-50 (MHPV…KSLA) and 214-406 (PAFA…RGKS). The segment covering 8-29 (GGQQPSAFAVSSSTTGTYQTKS) has biased composition (polar residues). Arg32 carries the post-translational modification Asymmetric dimethylarginine. Positions 33 to 335 (FGQPSLFGQN…RPRGGTLFGR (303 aa)) are FG-repeats. Polar residues-rich tracts occupy residues 38-50 (LFGQNSTPSKSLA) and 214-224 (PAFASPLSNQN). Low complexity predominate over residues 232–253 (STSAFGSSNSSFSTFPTASPGS). 2 stretches are compositionally biased toward basic and acidic residues: residues 288 to 321 (RKEDQDRSPRRHCHEAAEDPDPLSRGDHPPDKRP) and 342 to 359 (KSNKEAGRLGSKESKESG). The interval 414–550 (EEWIYSLGGV…AAGSLLSKSS (137 aa)) is DNA primase. Ser424 is modified (phosphoserine). N6-acetyllysine occurs at positions 483 and 484. Phosphoserine occurs at positions 502, 531, and 550. The 184-residue stretch at 768–951 (NNENMTKCLQ…RKSVFIGRKL (184 aa)) folds into the PCI domain. Residues 1124-1162 (HVAAEEVSMERQRLEEEKQRAEEERLKQERELMLTQLSE) are a coiled coil. The tract at residues 1793–1840 (RELQLSHGRSGMRSIHPPTSTFPTPLLHVHQKGKKKEESGREGSLSTE) is disordered.

This sequence belongs to the SAC3 family. In terms of assembly, component of the nuclear pore complex (NPC)-associated TREX-2 complex (transcription and export complex 2), composed of at least GANP, 2 copies of ENY2, PCID2, SEM1/DSS1, and either centrin CETN2 or centrin CETN3. The TREX-2 complex also associates with ALYREF/ALY. Interacts with RNA polymerase II subunit POLR2A and with the transcription elongation factor SUPT5H/SPT5. Interacts (via FG-repeats) with NXF1; this interaction is not mediated by RNA. Interacts with nuclear envelope proteins NUP62, NUP153 and RANBP2/NUP358; interaction with NUP153 is required for full localization at the nuclear pore complex. Interacts with several RNA helicases, including DHX9, DDX21, and DDX39A/DDX39, and with DNA topoisomerase TOP2A. Directly interacts with AICDA/AID. Interacts with the glucocorticoid receptor NR3C1. Interacts with MCM3. Post-translationally, phosphorylation at Ser-502 is induced in B-cells by CD40-stimulation, but not by bacterial lipopolysaccharide (LPS). Expressed at low levels in lymphoid organs, including thymus, spleen and lymph nodes. Up-regulated in stimulated B-cells in spleen and Peyer's patch germinal centers (at protein level).

The protein resides in the cytoplasm. The protein localises to the nucleus. It is found in the nucleus envelope. Its subcellular location is the nuclear pore complex. It localises to the nucleoplasm. The protein resides in the chromosome. The enzyme catalyses L-lysyl-[histone] + acetyl-CoA = N(6)-acetyl-L-lysyl-[histone] + CoA + H(+). Its function is as follows. As a component of the TREX-2 complex, involved in the export of mRNAs to the cytoplasm through the nuclear pores. Through the acetylation of histones, affects the assembly of nucleosomes at immunoglobulin variable region genes and promotes the recruitment and positioning of transcription complex to favor DNA cytosine deaminase AICDA/AID targeting, hence promoting somatic hypermutations. The chain is Germinal-center associated nuclear protein (Mcm3ap) from Mus musculus (Mouse).